Consider the following 358-residue polypeptide: Thiol protease aleurain (358 aa).

An N-terminal signal peptide occupies residues Met1–Ala21. The interaction with VSR1 stretch occupies residues Ala22–Val42. Positions Ala22–Ala140 are cleaved as a propeptide — activation peptide. An N-linked (GlcNAc...) asparagine glycan is attached at Asn125. 2 cysteine pairs are disulfide-bonded: Cys162-Cys205 and Cys196-Cys238. Cys165 is an active-site residue. An N-linked (GlcNAc...) asparagine glycan is attached at Asn254. A disulfide bridge connects residues Cys296 and Cys346. Catalysis depends on residues His305 and Asn325.

The protein belongs to the peptidase C1 family. In terms of assembly, interacts with VSR1/BP80B. As to expression, expressed in leaves (at protein level).

The protein localises to the vacuole. It carries out the reaction Hydrolysis of proteins, acting as an aminopeptidase (notably, cleaving Arg-|-Xaa bonds) as well as an endopeptidase.. Functionally, may play a role in proteolysis leading to mobilization of nitrogen during senescence and starvation. This chain is Thiol protease aleurain, found in Arabidopsis thaliana (Mouse-ear cress).